A 339-amino-acid polypeptide reads, in one-letter code: Ribonucleoside-diphosphate reductase subunit beta (339 aa).

Positions 87 and 121 each coordinate Fe cation. The active site involves Y125. H215 serves as a coordination point for Fe cation.

It belongs to the ribonucleoside diphosphate reductase small chain family. Tetramer of two alpha and two beta subunits. Requires Fe cation as cofactor.

It catalyses the reaction a 2'-deoxyribonucleoside 5'-diphosphate + [thioredoxin]-disulfide + H2O = a ribonucleoside 5'-diphosphate + [thioredoxin]-dithiol. In terms of biological role, provides the precursors necessary for DNA synthesis. Catalyzes the biosynthesis of deoxyribonucleotides from the corresponding ribonucleotides. The protein is Ribonucleoside-diphosphate reductase subunit beta (nrdF) of Mycoplasma pneumoniae (strain ATCC 29342 / M129 / Subtype 1) (Mycoplasmoides pneumoniae).